The following is a 343-amino-acid chain: Proto-oncogene serine/threonine-protein kinase mos (343 aa).

The Protein kinase domain maps to 63-339 (VCLMHRLGSG…LLQRDLKAFR (277 aa)). Residues 69-77 (LGSGGFGSV) and Lys90 contribute to the ATP site. Residue Asp198 is the Proton acceptor of the active site.

The protein belongs to the protein kinase superfamily. Ser/Thr protein kinase family. As to quaternary structure, interacts with MAP2K1/MEK1.

It is found in the cytoplasm. It carries out the reaction L-seryl-[protein] + ATP = O-phospho-L-seryl-[protein] + ADP + H(+). The catalysed reaction is L-threonyl-[protein] + ATP = O-phospho-L-threonyl-[protein] + ADP + H(+). Its function is as follows. Serine/threonine kinase involved in the regulation of MAPK signaling. Is an activator of the ERK1/2 signaling cascade playing an essential role in the stimulation of oocyte maturation. In Mus musculus (Mouse), this protein is Proto-oncogene serine/threonine-protein kinase mos.